A 222-amino-acid polypeptide reads, in one-letter code: Probable GTP-binding protein EngB (222 aa).

Residues 22–197 (TSAEIAFVGR…ETVVAGWFAG (176 aa)) enclose the EngB-type G domain. Mg(2+) contacts are provided by Ser-37 and Thr-59. Positions 201–222 (RQADELTDGEPDDRTPDPDSAS) are disordered. The span at 212–222 (DDRTPDPDSAS) shows a compositional bias: basic and acidic residues.

Belongs to the TRAFAC class TrmE-Era-EngA-EngB-Septin-like GTPase superfamily. EngB GTPase family. Mg(2+) serves as cofactor.

In terms of biological role, necessary for normal cell division and for the maintenance of normal septation. In Laribacter hongkongensis (strain HLHK9), this protein is Probable GTP-binding protein EngB.